The following is a 667-amino-acid chain: UvrABC system protein B (667 aa).

In terms of domain architecture, Helicase ATP-binding spans 31-414; the sequence is AGIESGEKEQ…EMDRTKHVVQ (384 aa). Residue 44–51 coordinates ATP; the sequence is GATGTGKT. Residues 97–120 carry the Beta-hairpin motif; the sequence is YYDYYQPEAYVPSSDTYIEKDSAI. In terms of domain architecture, Helicase C-terminal spans 435–597; it reads QIDDLVGEIN…ITPHTIKKAI (163 aa). A UVR domain is found at 630 to 665; the sequence is LDMISKLEEQMKTAAKKLDFEQAATLRDTVMELKAQ.

It belongs to the UvrB family. Forms a heterotetramer with UvrA during the search for lesions. Interacts with UvrC in an incision complex.

Its subcellular location is the cytoplasm. The UvrABC repair system catalyzes the recognition and processing of DNA lesions. A damage recognition complex composed of 2 UvrA and 2 UvrB subunits scans DNA for abnormalities. Upon binding of the UvrA(2)B(2) complex to a putative damaged site, the DNA wraps around one UvrB monomer. DNA wrap is dependent on ATP binding by UvrB and probably causes local melting of the DNA helix, facilitating insertion of UvrB beta-hairpin between the DNA strands. Then UvrB probes one DNA strand for the presence of a lesion. If a lesion is found the UvrA subunits dissociate and the UvrB-DNA preincision complex is formed. This complex is subsequently bound by UvrC and the second UvrB is released. If no lesion is found, the DNA wraps around the other UvrB subunit that will check the other stand for damage. The polypeptide is UvrABC system protein B (Lactiplantibacillus plantarum (strain ATCC BAA-793 / NCIMB 8826 / WCFS1) (Lactobacillus plantarum)).